Reading from the N-terminus, the 1440-residue chain is Gag-Pro-Pol polyprotein (1440 aa).

A lipid anchor (N-myristoyl glycine; by host) is attached at Gly-2. The segment at 95–116 is disordered; the sequence is EAPPSAPLAEDPQKPPPYPEQA. A PTAP/PSAP motif motif is present at residues 98-101; sequence PSAP. The PPXY motif motif lies at 109 to 112; sequence PPPY. 2 consecutive CCHC-type zinc fingers follow at residues 349-366 and 372-389; these read QPCFRCGQVGHWSRDCKQ and GPCPVCQDPTHWKRDCPQ. The 79-residue stretch at 457–535 folds into the Peptidase A2 domain; it reads VQALLDTGAD…NQWTILGRDA (79 aa). Catalysis depends on Asp-462, which acts as the For protease activity; shared with dimeric partner. The Reverse transcriptase domain occupies 593 to 783; that stretch reads LEAKHIEPYQ…GPIHFLGQVI (191 aa). The Mg(2+) site is built by Asp-659, Asp-734, Asp-735, Asp-1019, Glu-1052, Asp-1074, Asp-1135, Asp-1208, and Asp-1265. Positions 1010 to 1143 constitute an RNase H type-1 domain; the sequence is INHAPCLFSD…TDALMLAPLL (134 aa). The Integrase catalytic domain occupies 1197 to 1366; sequence RGHAPNDIWQ…PPVPEDTLPP (170 aa). The segment at residues 1371–1420 is a DNA-binding region (integrase-type); that stretch reads KWYYYKIPGLTNSRWSGPVQSLKEAAGAALIPVGGSYLWIPWRLLKRGIC.

As to quaternary structure, interacts with human TSG101. This interaction is essential for budding and release of viral particles. It depends on Mg(2+) as a cofactor. Specific enzymatic cleavages by the viral protease yield mature proteins. The polyprotein is cleaved during and after budding, this process is termed maturation. The protease is autoproteolytically processed at its N- and C-termini.

It localises to the virion. The enzyme catalyses Endonucleolytic cleavage to 5'-phosphomonoester.. It carries out the reaction DNA(n) + a 2'-deoxyribonucleoside 5'-triphosphate = DNA(n+1) + diphosphate. In terms of biological role, matrix protein p19 targets Gag, Gag-Pro and Gag-Pro-Pol polyproteins to the plasma membrane via a multipartite membrane binding signal, that includes its myristoylated N-terminus. Also mediates nuclear localization of the preintegration complex. Its function is as follows. Capsid protein p24 forms the conical core of the virus that encapsulates the genomic RNA-nucleocapsid complex. Functionally, nucleocapsid protein p15 is involved in the packaging and encapsidation of two copies of the genome. The aspartyl protease mediates proteolytic cleavages of Gag, Gag-Pro and Gag-Pro-Pol polyproteins during or shortly after the release of the virion from the plasma membrane. Cleavages take place as an ordered, step-wise cascade to yield mature proteins. This process is called maturation. Displays maximal activity during the budding process just prior to particle release from the cell. Hydrolyzes host EIF4GI in order to shut off the capped cellular mRNA translation. The resulting inhibition of cellular protein synthesis serves to ensure maximal viral gene expression and to evade host immune response. In terms of biological role, reverse transcriptase (RT) is a multifunctional enzyme that converts the viral RNA genome into dsDNA in the cytoplasm, shortly after virus entry into the cell. This enzyme displays a DNA polymerase activity that can copy either DNA or RNA templates, and a ribonuclease H (RNase H) activity that cleaves the RNA strand of RNA-DNA heteroduplexes in a partially processive 3' to 5'-endonucleasic mode. Conversion of viral genomic RNA into dsDNA requires many steps. A tRNA-Pro binds to the primer-binding site (PBS) situated at the 5'-end of the viral RNA. RT uses the 3' end of the tRNA primer to perform a short round of RNA-dependent minus-strand DNA synthesis. The reading proceeds through the U5 region and ends after the repeated (R) region which is present at both ends of viral RNA. The portion of the RNA-DNA heteroduplex is digested by the RNase H, resulting in a ssDNA product attached to the tRNA primer. This ssDNA/tRNA hybridizes with the identical R region situated at the 3' end of viral RNA. This template exchange, known as minus-strand DNA strong stop transfer, can be either intra- or intermolecular. RT uses the 3' end of this newly synthesized short ssDNA to perform the RNA-dependent minus-strand DNA synthesis of the whole template. RNase H digests the RNA template except for a polypurine tract (PPT) situated at the 5' end of the genome. It is not clear if both polymerase and RNase H activities are simultaneous. RNase H probably can proceed both in a polymerase-dependent (RNA cut into small fragments by the same RT performing DNA synthesis) and a polymerase-independent mode (cleavage of remaining RNA fragments by free RTs). Secondly, RT performs DNA-directed plus-strand DNA synthesis using the PPT that has not been removed by RNase H as primer. PPT and tRNA primers are then removed by RNase H. The 3' and 5' ssDNA PBS regions hybridize to form a circular dsDNA intermediate. Strand displacement synthesis by RT to the PBS and PPT ends produces a blunt ended, linear dsDNA copy of the viral genome that includes long terminal repeats (LTRs) at both ends. Its function is as follows. Integrase catalyzes viral DNA integration into the host chromosome, by performing a series of DNA cutting and joining reactions. This enzyme activity takes place after virion entry into a cell and reverse transcription of the RNA genome in dsDNA. The first step in the integration process is 3' processing. This step requires a complex comprising the viral genome, matrix protein, and integrase. This complex is called the pre-integration complex (PIC). The integrase protein removes 2 nucleotides from each 3' end of the viral DNA, leaving recessed dinucleotides OH's at the 3' ends. In the second step, the PIC access cell chromosomes during cell division. The third step, termed strand transfer, the integrase protein joins the previously processed 3' ends to the 5'-ends of strands of target cellular DNA at the site of integration. The 5'-ends are produced by integrase-catalyzed staggered cuts, 5 bp apart. A Y-shaped, gapped, recombination intermediate results, with the 5'-ends of the viral DNA strands and the 3' ends of target DNA strands remaining unjoined, flanking a gap of 5 bp. The last step is viral DNA integration into host chromosome. This involves host DNA repair synthesis in which the 5 bp gaps between the unjoined strands (see above) are filled in and then ligated. The sequence is that of Gag-Pro-Pol polyprotein (gag-pro-pol) from Human T-cell leukemia virus 3 (strain 2026ND) (HTLV-3).